The primary structure comprises 412 residues: Membrane fusion protein MtrC (412 aa).

Residues 1 to 24 form the signal peptide; it reads MAFYASKAMRAAALAAAVALALSS. Residue Cys-25 is the site of N-palmitoyl cysteine attachment. Cys-25 carries S-diacylglycerol cysteine lipidation. The tract at residues 377–412 is disordered; sequence AKKVTPKEWAPSENQAAAPQAGVQTASEAKPASEAK. Residues 388–403 are compositionally biased toward polar residues; that stretch reads SENQAAAPQAGVQTAS.

The protein belongs to the membrane fusion protein (MFP) (TC 8.A.1) family.

It is found in the cell inner membrane. Cell membrane lipoprotein, involved in cell membrane permeability to hydrophobic compounds such as antibiotics, dyes and detergents. The polypeptide is Membrane fusion protein MtrC (mtrC) (Neisseria gonorrhoeae).